Here is a 289-residue protein sequence, read N- to C-terminus: 4-hydroxy-3-methylbut-2-enyl diphosphate reductase (289 aa).

Cysteine 12 serves as a coordination point for [4Fe-4S] cluster. 2 residues coordinate (2E)-4-hydroxy-3-methylbut-2-enyl diphosphate: histidine 44 and histidine 81. Residues histidine 44 and histidine 81 each coordinate dimethylallyl diphosphate. Positions 44 and 81 each coordinate isopentenyl diphosphate. Residue cysteine 103 participates in [4Fe-4S] cluster binding. Histidine 130 lines the (2E)-4-hydroxy-3-methylbut-2-enyl diphosphate pocket. Histidine 130 contacts dimethylallyl diphosphate. Histidine 130 contacts isopentenyl diphosphate. The active-site Proton donor is glutamate 132. Threonine 174 provides a ligand contact to (2E)-4-hydroxy-3-methylbut-2-enyl diphosphate. Cysteine 202 provides a ligand contact to [4Fe-4S] cluster. (2E)-4-hydroxy-3-methylbut-2-enyl diphosphate contacts are provided by serine 230, asparagine 232, and serine 273. Dimethylallyl diphosphate is bound by residues serine 230, asparagine 232, and serine 273. 3 residues coordinate isopentenyl diphosphate: serine 230, asparagine 232, and serine 273.

The protein belongs to the IspH family. [4Fe-4S] cluster serves as cofactor.

It catalyses the reaction isopentenyl diphosphate + 2 oxidized [2Fe-2S]-[ferredoxin] + H2O = (2E)-4-hydroxy-3-methylbut-2-enyl diphosphate + 2 reduced [2Fe-2S]-[ferredoxin] + 2 H(+). It carries out the reaction dimethylallyl diphosphate + 2 oxidized [2Fe-2S]-[ferredoxin] + H2O = (2E)-4-hydroxy-3-methylbut-2-enyl diphosphate + 2 reduced [2Fe-2S]-[ferredoxin] + 2 H(+). It participates in isoprenoid biosynthesis; dimethylallyl diphosphate biosynthesis; dimethylallyl diphosphate from (2E)-4-hydroxy-3-methylbutenyl diphosphate: step 1/1. Its pathway is isoprenoid biosynthesis; isopentenyl diphosphate biosynthesis via DXP pathway; isopentenyl diphosphate from 1-deoxy-D-xylulose 5-phosphate: step 6/6. Its function is as follows. Catalyzes the conversion of 1-hydroxy-2-methyl-2-(E)-butenyl 4-diphosphate (HMBPP) into a mixture of isopentenyl diphosphate (IPP) and dimethylallyl diphosphate (DMAPP). Acts in the terminal step of the DOXP/MEP pathway for isoprenoid precursor biosynthesis. The chain is 4-hydroxy-3-methylbut-2-enyl diphosphate reductase from Treponema denticola (strain ATCC 35405 / DSM 14222 / CIP 103919 / JCM 8153 / KCTC 15104).